A 231-amino-acid chain; its full sequence is Cytidylate kinase 1 (231 aa).

An ATP-binding site is contributed by 7–15 (GPSGAGKGT).

Belongs to the cytidylate kinase family. Type 1 subfamily.

It localises to the cytoplasm. The catalysed reaction is CMP + ATP = CDP + ADP. It catalyses the reaction dCMP + ATP = dCDP + ADP. The chain is Cytidylate kinase 1 from Haemophilus influenzae (strain ATCC 51907 / DSM 11121 / KW20 / Rd).